A 220-amino-acid polypeptide reads, in one-letter code: Adenylate kinase (220 aa).

10 to 15 (GAGKGT) provides a ligand contact to ATP. The NMP stretch occupies residues 30 to 59 (STGDMLRAAVKAGTPLGVEAKTYMDEGKLV). Residues Thr-31, Arg-36, 57 to 59 (KLV), 85 to 88 (GFPR), and Gln-92 each bind AMP. The interval 122–159 (GRRTHPASGRTYHVKFNPPKVEGKDDVTGEPLVQRDDD) is LID. Residues Arg-123 and 132-133 (TY) each bind ATP. Residues Arg-156 and Arg-167 each contribute to the AMP site. Residue Gly-206 participates in ATP binding.

Belongs to the adenylate kinase family. Monomer.

It localises to the cytoplasm. It catalyses the reaction AMP + ATP = 2 ADP. It functions in the pathway purine metabolism; AMP biosynthesis via salvage pathway; AMP from ADP: step 1/1. In terms of biological role, catalyzes the reversible transfer of the terminal phosphate group between ATP and AMP. Plays an important role in cellular energy homeostasis and in adenine nucleotide metabolism. The protein is Adenylate kinase of Burkholderia mallei (strain NCTC 10247).